The following is a 240-amino-acid chain: Large ribosomal subunit protein uL2 (240 aa).

A compositionally biased stretch (polar residues) spans 1–11; that stretch reads MGKRLISQNRG. 2 disordered regions span residues 1–26 and 206–240; these read MGKR…KRKG and GGGR…TGRK. 2 stretches are compositionally biased toward basic residues: residues 13-26 and 228-240; these read GTPK…KRKG and KVGH…TGRK.

The protein belongs to the universal ribosomal protein uL2 family. In terms of assembly, part of the 50S ribosomal subunit. Forms a bridge to the 30S subunit in the 70S ribosome.

Functionally, one of the primary rRNA binding proteins. Required for association of the 30S and 50S subunits to form the 70S ribosome, for tRNA binding and peptide bond formation. It has been suggested to have peptidyltransferase activity; this is somewhat controversial. Makes several contacts with the 16S rRNA in the 70S ribosome. The sequence is that of Large ribosomal subunit protein uL2 from Methanococcus vannielii (strain ATCC 35089 / DSM 1224 / JCM 13029 / OCM 148 / SB).